Reading from the N-terminus, the 150-residue chain is Pyruvoyl-dependent arginine decarboxylase (150 aa).

Residue S42 is modified to Pyruvic acid (Ser).

Belongs to the PdaD family. Requires pyruvate as cofactor.

It carries out the reaction L-arginine + H(+) = agmatine + CO2. This is Pyruvoyl-dependent arginine decarboxylase from Methanopyrus kandleri (strain AV19 / DSM 6324 / JCM 9639 / NBRC 100938).